The primary structure comprises 125 residues: S-adenosylmethionine decarboxylase proenzyme (125 aa).

The active-site Schiff-base intermediate with substrate; via pyruvic acid is serine 71. A Pyruvic acid (Ser); by autocatalysis modification is found at serine 71. Residue histidine 76 is the Proton acceptor; for processing activity of the active site. Cysteine 91 functions as the Proton donor; for catalytic activity in the catalytic mechanism.

The protein belongs to the prokaryotic AdoMetDC family. Type 1 subfamily. Heterotetramer of two alpha and two beta chains arranged as a dimer of alpha/beta heterodimers. Pyruvate serves as cofactor. In terms of processing, is synthesized initially as an inactive proenzyme. Formation of the active enzyme involves a self-maturation process in which the active site pyruvoyl group is generated from an internal serine residue via an autocatalytic post-translational modification. Two non-identical subunits are generated from the proenzyme in this reaction, and the pyruvate is formed at the N-terminus of the alpha chain, which is derived from the carboxyl end of the proenzyme. The post-translation cleavage follows an unusual pathway, termed non-hydrolytic serinolysis, in which the side chain hydroxyl group of the serine supplies its oxygen atom to form the C-terminus of the beta chain, while the remainder of the serine residue undergoes an oxidative deamination to produce ammonia and the pyruvoyl group blocking the N-terminus of the alpha chain.

It carries out the reaction S-adenosyl-L-methionine + H(+) = S-adenosyl 3-(methylsulfanyl)propylamine + CO2. It functions in the pathway amine and polyamine biosynthesis; S-adenosylmethioninamine biosynthesis; S-adenosylmethioninamine from S-adenosyl-L-methionine: step 1/1. In terms of biological role, catalyzes the decarboxylation of S-adenosylmethionine to S-adenosylmethioninamine (dcAdoMet), the propylamine donor required for the synthesis of the polyamines spermine and spermidine from the diamine putrescine. In Pyrobaculum arsenaticum (strain DSM 13514 / JCM 11321 / PZ6), this protein is S-adenosylmethionine decarboxylase proenzyme.